Reading from the N-terminus, the 405-residue chain is MNLALNLLHKRGFLKQCTSLKVLSDLMDREKIVFYAGVDATSSSLHIGHLIPFLAMMHLRQHGHIPIVLIGDSTTKIGDPSGKSEMRKILSLEEISNNAFSIKNQLQRITKFSSKCFIHNSNWLDNLNYIEFLRDIGIHFSVNRMLSFETYKKRLDFGLSFIEFNYQLLQSYDYYMLNKIRNCRLQIGGDDQWGNIISGIDLIRKKAGVETFGLTFPLITRSDGKKMGKSEKGAVYLDSSLYSIYDFYQYFRNTSDSDVKTFLYLFTFLEEDEIELISNFKGNSLNKAKEILAFEITKIVHGEAEALKVQEASFAAFRGSGDRSNIPFFKFSFSNLEEEVLLINLMLDSKIVPSKSEGRRLIDSGGVYINGKRVENQNHCLTRKDFNNNEIELRVGKKKFLRIVL.

Residue Y35 participates in L-tyrosine binding. The 'HIGH' region motif lies at 40–49 (ATSSSLHIGH). Positions 166 and 170 each coordinate L-tyrosine. The 'KMSKS' region motif lies at 226-230 (KMGKS). An ATP-binding site is contributed by K229. Residues 340-404 (VLLINLMLDS…VGKKKFLRIV (65 aa)) enclose the S4 RNA-binding domain.

Belongs to the class-I aminoacyl-tRNA synthetase family. TyrS type 1 subfamily. Homodimer.

The protein localises to the cytoplasm. The enzyme catalyses tRNA(Tyr) + L-tyrosine + ATP = L-tyrosyl-tRNA(Tyr) + AMP + diphosphate + H(+). Catalyzes the attachment of tyrosine to tRNA(Tyr) in a two-step reaction: tyrosine is first activated by ATP to form Tyr-AMP and then transferred to the acceptor end of tRNA(Tyr). This chain is Tyrosine--tRNA ligase, found in Borreliella afzelii (strain PKo) (Borrelia afzelii).